Reading from the N-terminus, the 159-residue chain is Ribosomal RNA large subunit methyltransferase H (159 aa).

S-adenosyl-L-methionine is bound by residues Leu76, Gly108, and 127–132 (FSKMTF).

It belongs to the RNA methyltransferase RlmH family. As to quaternary structure, homodimer.

It is found in the cytoplasm. The enzyme catalyses pseudouridine(1915) in 23S rRNA + S-adenosyl-L-methionine = N(3)-methylpseudouridine(1915) in 23S rRNA + S-adenosyl-L-homocysteine + H(+). Specifically methylates the pseudouridine at position 1915 (m3Psi1915) in 23S rRNA. The protein is Ribosomal RNA large subunit methyltransferase H of Clostridium botulinum (strain Eklund 17B / Type B).